The following is a 688-amino-acid chain: MSKDFLLEIGLEEMPAQYVTSSVLQLEKRVTDWLTENKIEFGEIKTYSTPRRLTVLVEGMAEEQANRVEEAKGPAKKIALDDEGNWSKAALGFAKSQKVDPADLTFRDIKGVEYIYIKKEVIGEKTSTLLPNLEKVVTSMTFPVSMHWGSNDLRYIRPIKWLIAMFGEEIIPFEITGVTTSNTSRGHRFLGKSATIKQPSDYPNALLEQFVVVNAEERKQAIVEQLRELESMENWQIKEDDDLLEEVTNLVEYPTVLSGNFEKEYLELPEEVLITTMKEHQRYFPVFSQAGELLPHFVTVRNGNHENLDTVARGNEKVLRARLSDADFFYQEDLKMTIDEAVAKLQNIVFHEKLGTLTEKMKRVQKVALMLADYLDWQEEDKQDIIRLTNIYKFDLVTNIVGEFPELQGLMGEKYALLQGEKPAIATAIREHYLPNSAEGELPQTDLGSLIAIADKLETLIGFFCVNIVPTGSADPFGLRRSAFGAMRIIQANGWDIPMLEVISRIVDMERAEGSAELPGADVKKEVQTFLKNRLRVILQGHHIRHDIIDAVIGGDPNVIPQLIDRAQILNEHAEAEWFRPTIEALSRVVKIAKKYEDGVEVDPALFENEYEQALFDKLEKLKFDYAGLTIIERLKAFADLRTTIDAYFDNTLVMSDNDELKNNRLALLFELASFIKEFAQMDEINVK.

Belongs to the class-II aminoacyl-tRNA synthetase family. Tetramer of two alpha and two beta subunits.

The protein localises to the cytoplasm. It carries out the reaction tRNA(Gly) + glycine + ATP = glycyl-tRNA(Gly) + AMP + diphosphate. In Listeria monocytogenes serotype 4a (strain HCC23), this protein is Glycine--tRNA ligase beta subunit.